The chain runs to 37 residues: M-oxotoxin-Ot2c (37 aa).

In terms of tissue distribution, expressed by the venom gland.

The protein localises to the secreted. Its function is as follows. Disrupts biological membranes, particularly those rich in phosphocholine. Has antimicrobial activity against Gram-negative bacterium E.coli, Gram-positive bacteria B.subtilis and S.aureus, and hemolytic activity against sheep, pig and guinea pig red blood cells. Has insecticidal activity against S.frugiperda ovarian cells by opening non-selective ion channels. Enhances the insecticidal activity of spider venom neurotoxic peptides. The protein is M-oxotoxin-Ot2c of Oxyopes takobius (Lynx spider).